The primary structure comprises 583 residues: Inactive carboxylesterase-like protein VdtD (583 aa).

The first 23 residues, 1 to 23, serve as a signal peptide directing secretion; the sequence is MFMTQIVFGIAPTLLKTFSHLTA. N-linked (GlcNAc...) asparagine glycans are attached at residues Asn-84, Asn-109, Asn-221, Asn-265, Asn-307, Asn-350, Asn-388, Asn-448, and Asn-468.

It belongs to the type-B carboxylesterase/lipase family.

It functions in the pathway secondary metabolite biosynthesis. In terms of biological role, inactive carboxylesterase-like protein; part of the gene cluster that mediates the biosynthesis of viriditoxin, one of the 'classical' secondary metabolites produced by fungi and that has antibacterial activity. The first step is performed by the polyketide synthase VdtA which condenses one acetyl-CoA and 6 malonyl-CoA units to form the heptaketide monomer backbone of viriditoxin. The product of VdtA is then O-methylated on C7 by the O-methyltransferase VdtC. The O-methyl group is important for the stereoselective coupling of the monomers at the final step of viriditoxin biosynthesis. The short-chain dehydrogenase/reductase VdtF then acts as a stereospecific reductase converting the pyrone to dihydropyrone via the reduction of the C3-C4 double bond. The FAD-binding monooxygenase VdtE then converts the ketone group into a methyl-ester group to yield semi-viriditoxin. Finally, the laccase VdtB is involved in dimerization of 2 semi-viriditoxin molecules to yield the final viriditoxin. VdtB is responsible for the regioselective 6,6'-coupling of semi-viriditoxin, which yields (M)-viriditoxin and (P)-viriditoxin at a ratio of 1:2. The non-catalytic carboxylesterase-like protein VdtD affects the stereochemistical outcome of the coupling. The highly reducing polyketide synthase VdtX is not involved in viriditoxin synthesis, but might possibly play a role in the production of additional metabolites not identified yet. This chain is Inactive carboxylesterase-like protein VdtD, found in Byssochlamys spectabilis (Paecilomyces variotii).